Here is a 353-residue protein sequence, read N- to C-terminus: Photosystem II D2 protein (353 aa).

An N-acetylthreonine modification is found at Thr-2. Phosphothreonine is present on Thr-2. Residues 41 to 61 form a helical membrane-spanning segment; the sequence is CAYFALGGWFTGTTFVTSWYT. Residue His-118 coordinates chlorophyll a. A helical membrane pass occupies residues 125 to 141; that stretch reads GFMLRQFELARSVQLRP. Positions 130 and 143 each coordinate pheophytin a. The chain crosses the membrane as a helical span at residues 153–166; the sequence is VFVSVFLIYPLGQS. Residue His-198 coordinates chlorophyll a. The helical transmembrane segment at 208–228 threads the bilayer; the sequence is AALLCAIHGATVENTLFEDGD. Residues His-215 and Phe-262 each contribute to the a plastoquinone site. His-215 provides a ligand contact to Fe cation. His-269 contacts Fe cation. The chain crosses the membrane as a helical span at residues 279–295; sequence GLWMSALGVVGLALNLR.

Belongs to the reaction center PufL/M/PsbA/D family. As to quaternary structure, PSII is composed of 1 copy each of membrane proteins PsbA, PsbB, PsbC, PsbD, PsbE, PsbF, PsbH, PsbI, PsbJ, PsbK, PsbL, PsbM, PsbT, PsbX, PsbY, PsbZ, Psb30/Ycf12, at least 3 peripheral proteins of the oxygen-evolving complex and a large number of cofactors. It forms dimeric complexes. The D1/D2 heterodimer binds P680, chlorophylls that are the primary electron donor of PSII, and subsequent electron acceptors. It shares a non-heme iron and each subunit binds pheophytin, quinone, additional chlorophylls, carotenoids and lipids. There is also a Cl(-1) ion associated with D1 and D2, which is required for oxygen evolution. The PSII complex binds additional chlorophylls, carotenoids and specific lipids. serves as cofactor.

The protein resides in the plastid. It localises to the chloroplast thylakoid membrane. The catalysed reaction is 2 a plastoquinone + 4 hnu + 2 H2O = 2 a plastoquinol + O2. Photosystem II (PSII) is a light-driven water:plastoquinone oxidoreductase that uses light energy to abstract electrons from H(2)O, generating O(2) and a proton gradient subsequently used for ATP formation. It consists of a core antenna complex that captures photons, and an electron transfer chain that converts photonic excitation into a charge separation. The D1/D2 (PsbA/PsbD) reaction center heterodimer binds P680, the primary electron donor of PSII as well as several subsequent electron acceptors. D2 is needed for assembly of a stable PSII complex. The chain is Photosystem II D2 protein from Nandina domestica (Heavenly bamboo).